The chain runs to 152 residues: 6,7-dimethyl-8-ribityllumazine synthase (152 aa).

Residues Phe22, 54 to 56 (AFE), and 78 to 80 (AVI) contribute to the 5-amino-6-(D-ribitylamino)uracil site. 83–84 (ET) is a (2S)-2-hydroxy-3-oxobutyl phosphate binding site. The active-site Proton donor is His86. Phe111 is a binding site for 5-amino-6-(D-ribitylamino)uracil. Arg125 provides a ligand contact to (2S)-2-hydroxy-3-oxobutyl phosphate.

It belongs to the DMRL synthase family.

The enzyme catalyses (2S)-2-hydroxy-3-oxobutyl phosphate + 5-amino-6-(D-ribitylamino)uracil = 6,7-dimethyl-8-(1-D-ribityl)lumazine + phosphate + 2 H2O + H(+). Its pathway is cofactor biosynthesis; riboflavin biosynthesis; riboflavin from 2-hydroxy-3-oxobutyl phosphate and 5-amino-6-(D-ribitylamino)uracil: step 1/2. Catalyzes the formation of 6,7-dimethyl-8-ribityllumazine by condensation of 5-amino-6-(D-ribitylamino)uracil with 3,4-dihydroxy-2-butanone 4-phosphate. This is the penultimate step in the biosynthesis of riboflavin. The chain is 6,7-dimethyl-8-ribityllumazine synthase from Limosilactobacillus reuteri (strain DSM 20016) (Lactobacillus reuteri).